The sequence spans 82 residues: EMBRYO SURROUNDING FACTOR 1-like protein 10 (82 aa).

Residues 1 to 22 (MSSLYFAILCLFMIFLVPLHEF) form the signal peptide. 4 disulfides stabilise this stretch: Cys39-Cys55, Cys44-Cys74, Cys53-Cys70, and Cys56-Cys63.

The protein belongs to the MEG family. As to expression, expressed in stems, leaves and flowers.

This is EMBRYO SURROUNDING FACTOR 1-like protein 10 (ESFL10) from Arabidopsis thaliana (Mouse-ear cress).